The primary structure comprises 545 residues: Chaperonin GroEL (545 aa).

ATP contacts are provided by residues 30-33 (TLGP), lysine 51, 87-91 (DGTTT), glycine 415, 479-481 (NAA), and aspartate 495.

The protein belongs to the chaperonin (HSP60) family. As to quaternary structure, forms a cylinder of 14 subunits composed of two heptameric rings stacked back-to-back. Interacts with the co-chaperonin GroES.

Its subcellular location is the cytoplasm. The enzyme catalyses ATP + H2O + a folded polypeptide = ADP + phosphate + an unfolded polypeptide.. Together with its co-chaperonin GroES, plays an essential role in assisting protein folding. The GroEL-GroES system forms a nano-cage that allows encapsulation of the non-native substrate proteins and provides a physical environment optimized to promote and accelerate protein folding. The sequence is that of Chaperonin GroEL from Cellvibrio japonicus (strain Ueda107) (Pseudomonas fluorescens subsp. cellulosa).